We begin with the raw amino-acid sequence, 349 residues long: MLIAQRPTLVEDPISEFRSRFVIEPLEPGFGYTLGNSLRRTLLSSIPGASVTSIRIDGVLHEFSTVPGVKEDVTDLILNLKELVVSSDNDEPTVMYLRKQGPGEVTAADIAPPAGVEVHSPELRLATLNDKGKLEIELTVERGRGYVSAAQNKQAGQEIGRIPIDSIYSPVLKVTYKVEATRVEQRTDFDRLIVDVETKPSISPRDAMASAGKTLVGLFGLAQELNAEAEGVDIGPSAADAALAADLALPIEEMDLTVRSYNCLKREGIHTIGELVSRSEADLLDIRNFGQKSIDEVKTKLGAMGLQLKDSPPGFDPRQAVDTYGTDSYNPAFSDPSDDGAEFVETEQY.

The interval 1–226 (MLIAQRPTLV…GLFGLAQELN (226 aa)) is alpha N-terminal domain (alpha-NTD). An alpha C-terminal domain (alpha-CTD) region spans residues 241 to 349 (AALAADLALP…GAEFVETEQY (109 aa)). Positions 308 to 349 (LKDSPPGFDPRQAVDTYGTDSYNPAFSDPSDDGAEFVETEQY) are disordered. Positions 336-349 (PSDDGAEFVETEQY) are enriched in acidic residues.

This sequence belongs to the RNA polymerase alpha chain family. As to quaternary structure, homodimer. The RNAP catalytic core consists of 2 alpha, 1 beta, 1 beta' and 1 omega subunit. When a sigma factor is associated with the core the holoenzyme is formed, which can initiate transcription.

It catalyses the reaction RNA(n) + a ribonucleoside 5'-triphosphate = RNA(n+1) + diphosphate. Its function is as follows. DNA-dependent RNA polymerase catalyzes the transcription of DNA into RNA using the four ribonucleoside triphosphates as substrates. This Frankia alni (strain DSM 45986 / CECT 9034 / ACN14a) protein is DNA-directed RNA polymerase subunit alpha.